Consider the following 352-residue polypeptide: NAD(P)H pyrophosphatase NUDT13, mitochondrial (352 aa).

Residues 1-20 (MSLYCRTFFRRKSFGCYRLL) constitute a mitochondrion transit peptide. Residues 196–323 (PQMAPVVITL…SLALQPSEAS (128 aa)) form the Nudix hydrolase domain. The short motif at 216 to 240 (RQSSFPKGLYSALAGFCDIGESVEE) is the Nudix box element.

The protein belongs to the Nudix hydrolase family. Mg(2+) serves as cofactor. It depends on Mn(2+) as a cofactor.

The protein localises to the mitochondrion. The catalysed reaction is NADH + H2O = reduced beta-nicotinamide D-ribonucleotide + AMP + 2 H(+). It carries out the reaction NAD(+) + H2O = beta-nicotinamide D-ribonucleotide + AMP + 2 H(+). It catalyses the reaction NADPH + H2O = reduced beta-nicotinamide D-ribonucleotide + adenosine 2',5'-bisphosphate + 2 H(+). Functionally, NAD(P)H pyrophosphatase that hydrolyzes NADH into NMNH and AMP, and NADPH into NMNH and 2',5'-ADP. Has a marked preference for the reduced pyridine nucleotides. Does not show activity toward NAD-capped RNAs; the NAD-cap is an atypical cap present at the 5'-end of some RNAs. In Mus musculus (Mouse), this protein is NAD(P)H pyrophosphatase NUDT13, mitochondrial.